The chain runs to 60 residues: Probable tautomerase SAG1079 (60 aa).

The active-site Proton acceptor; via imino nitrogen is Pro2.

It belongs to the 4-oxalocrotonate tautomerase family.

The sequence is that of Probable tautomerase SAG1079 from Streptococcus agalactiae serotype V (strain ATCC BAA-611 / 2603 V/R).